Here is a 207-residue protein sequence, read N- to C-terminus: dTTP/UTP pyrophosphatase (207 aa).

Asp-80 serves as the catalytic Proton acceptor.

The protein belongs to the Maf family. YhdE subfamily. A divalent metal cation serves as cofactor.

The protein localises to the cytoplasm. The enzyme catalyses dTTP + H2O = dTMP + diphosphate + H(+). It carries out the reaction UTP + H2O = UMP + diphosphate + H(+). Functionally, nucleoside triphosphate pyrophosphatase that hydrolyzes dTTP and UTP. May have a dual role in cell division arrest and in preventing the incorporation of modified nucleotides into cellular nucleic acids. The sequence is that of dTTP/UTP pyrophosphatase (maf1) from Agrobacterium fabrum (strain C58 / ATCC 33970) (Agrobacterium tumefaciens (strain C58)).